The sequence spans 473 residues: Glutamate--tRNA ligase (473 aa).

The 'HIGH' region motif lies at 9-19 (PSPTGYLHVGG). Zn(2+) is bound by residues cysteine 98, cysteine 100, cysteine 125, and aspartate 127. Positions 237-241 (KLSKR) match the 'KMSKS' region motif. An ATP-binding site is contributed by lysine 240.

Belongs to the class-I aminoacyl-tRNA synthetase family. Glutamate--tRNA ligase type 1 subfamily. As to quaternary structure, monomer. Zn(2+) is required as a cofactor.

It is found in the cytoplasm. It carries out the reaction tRNA(Glu) + L-glutamate + ATP = L-glutamyl-tRNA(Glu) + AMP + diphosphate. Its function is as follows. Catalyzes the attachment of glutamate to tRNA(Glu) in a two-step reaction: glutamate is first activated by ATP to form Glu-AMP and then transferred to the acceptor end of tRNA(Glu). This chain is Glutamate--tRNA ligase, found in Sodalis glossinidius (strain morsitans).